Consider the following 476-residue polypeptide: UDP-N-acetylmuramate--L-alanine ligase (476 aa).

121 to 127 contributes to the ATP binding site; the sequence is GAHGKTT.

This sequence belongs to the MurCDEF family.

Its subcellular location is the cytoplasm. It carries out the reaction UDP-N-acetyl-alpha-D-muramate + L-alanine + ATP = UDP-N-acetyl-alpha-D-muramoyl-L-alanine + ADP + phosphate + H(+). The protein operates within cell wall biogenesis; peptidoglycan biosynthesis. In terms of biological role, cell wall formation. This chain is UDP-N-acetylmuramate--L-alanine ligase, found in Clavibacter sepedonicus (Clavibacter michiganensis subsp. sepedonicus).